The sequence spans 399 residues: Succinate--CoA ligase [ADP-forming] subunit beta (399 aa).

One can recognise an ATP-grasp domain in the interval 9–254; sequence KAVLQPFGVS…ETEEDAKEIE (246 aa). Residues Lys-46, 53 to 55, Glu-109, Ser-112, and Glu-117 contribute to the ATP site; that span reads GRG. Mg(2+)-binding residues include Asn-209 and Asp-223. Residues Asn-274 and 331–333 contribute to the substrate site; that span reads GIM.

It belongs to the succinate/malate CoA ligase beta subunit family. Heterotetramer of two alpha and two beta subunits. Mg(2+) is required as a cofactor.

It catalyses the reaction succinate + ATP + CoA = succinyl-CoA + ADP + phosphate. The enzyme catalyses GTP + succinate + CoA = succinyl-CoA + GDP + phosphate. It functions in the pathway carbohydrate metabolism; tricarboxylic acid cycle; succinate from succinyl-CoA (ligase route): step 1/1. In terms of biological role, succinyl-CoA synthetase functions in the citric acid cycle (TCA), coupling the hydrolysis of succinyl-CoA to the synthesis of either ATP or GTP and thus represents the only step of substrate-level phosphorylation in the TCA. The beta subunit provides nucleotide specificity of the enzyme and binds the substrate succinate, while the binding sites for coenzyme A and phosphate are found in the alpha subunit. This is Succinate--CoA ligase [ADP-forming] subunit beta from Rhodopseudomonas palustris (strain BisB18).